Here is a 1077-residue protein sequence, read N- to C-terminus: Adenylate cyclase type 4 (1077 aa).

Residues 1–28 lie on the Cytoplasmic side of the membrane; that stretch reads MARLFSPRPPPSEDLFYETYYSLSQQYP. The next 6 helical transmembrane spans lie at 29-50, 61-80, 94-117, 120-138, 141-162, and 170-190; these read LLIL…VAWA, FLTT…GLAS, GLIW…VSAW, VSFF…PLGM, AAAA…YLGW, and LLPQ…VGAY. The Cytoplasmic portion of the chain corresponds to 191–582; that stretch reads HKALMERALR…YRLSALPAFK (392 aa). 3 residues coordinate Mg(2+): Asp278, Ile279, and Asp322. Residues 278-283, 320-322, and Arg366 each bind ATP; these read DIVGFT and LGD. A disordered region spans residues 503 to 524; the sequence is TSTPLPEKAFSPQWSLDRSRTP. Ser517 carries the post-translational modification Phosphoserine. Thr533 bears the Phosphothreonine mark. The next 3 helical transmembrane spans lie at 583-604, 608-630, and 661-684; these read YYAA…LVTT, ALII…CFSE, and VALG…FLPV. Over 685–717 the chain is Extracellular; sequence SSDCLFLASNVSSVTFNASWEMPGSLPLISIPL. N-linked (GlcNAc...) asparagine glycans are attached at residues Asn694 and Asn701. The next 3 helical transmembrane spans lie at 718–738, 746–766, and 793–809; these read ISIP…SLFL, LLLL…SHAW, and MGAI…LVLA. Over 810-1077 the chain is Cytoplasmic; the sequence is RQNEYYCRLD…LTRTGSPSAS (268 aa). ATP-binding positions include Lys927, 1007-1009, 1014-1018, and Lys1054; these read DIW and NVASR.

The protein belongs to the adenylyl cyclase class-4/guanylyl cyclase family. Mg(2+) serves as cofactor. Mn(2+) is required as a cofactor.

The protein localises to the cell membrane. Its subcellular location is the cytoplasm. The catalysed reaction is ATP = 3',5'-cyclic AMP + diphosphate. Its activity is regulated as follows. Activated by forskolin. Insensitive to calcium/calmodulin. Stimulated by GNAS and by the G-protein beta and gamma subunit complex. In terms of biological role, catalyzes the formation of the signaling molecule cAMP in response to G-protein signaling. This chain is Adenylate cyclase type 4 (Adcy4), found in Mus musculus (Mouse).